The following is a 122-amino-acid chain: Protein 7a (122 aa).

A signal peptide spans 1–15 (MKIILFLTLIALASS). Residues 16–81 (ELYHYQECVR…RHTYQLRARS (66 aa)) form the X4e domain. At 16–96 (ELYHYQECVR…FTRQEEVHQE (81 aa)) the chain is on the virion surface side. Cystine bridges form between cysteine 23/cysteine 58 and cysteine 35/cysteine 67. The chain crosses the membrane as a helical span at residues 97–117 (LYSPLFLIVAALVFIILCFTI). Residues 118-122 (KRKTE) lie on the Intravirion side of the membrane. Positions 118 to 122 (KRKTE) match the Di-lysine motif motif.

As to quaternary structure, interacts with the spike glycoprotein, M protein, E protein and the accessory protein 3.

Its subcellular location is the virion. The protein resides in the host endoplasmic reticulum membrane. It localises to the host endoplasmic reticulum-Golgi intermediate compartment membrane. The protein localises to the host Golgi apparatus membrane. Functionally, non-structural protein which is dispensable for virus replication in cell culture. In Rhinolophus macrotis (Big-eared horseshoe bat), this protein is Protein 7a.